Reading from the N-terminus, the 143-residue chain is Nucleoside diphosphate kinase (143 aa).

The ATP site is built by lysine 11, phenylalanine 59, arginine 87, threonine 93, arginine 104, and asparagine 114. The Pros-phosphohistidine intermediate role is filled by histidine 117.

Belongs to the NDK family. In terms of assembly, homotetramer. Mg(2+) serves as cofactor.

Its subcellular location is the cytoplasm. The enzyme catalyses a 2'-deoxyribonucleoside 5'-diphosphate + ATP = a 2'-deoxyribonucleoside 5'-triphosphate + ADP. It carries out the reaction a ribonucleoside 5'-diphosphate + ATP = a ribonucleoside 5'-triphosphate + ADP. In terms of biological role, major role in the synthesis of nucleoside triphosphates other than ATP. The ATP gamma phosphate is transferred to the NDP beta phosphate via a ping-pong mechanism, using a phosphorylated active-site intermediate. The chain is Nucleoside diphosphate kinase from Edwardsiella ictaluri (strain 93-146).